The sequence spans 404 residues: Phosphoribulokinase, chloroplastic (404 aa).

A chloroplast-targeting transit peptide spans 1–53 (MAFCSPHTTTSLRSPCTTIPNSGFRQNQVIFFTTRSSRRSNTRHGARTFQVSC). Cysteine 69 and cysteine 108 are joined by a disulfide.

It belongs to the phosphoribulokinase family.

It localises to the plastid. The protein resides in the chloroplast. It carries out the reaction D-ribulose 5-phosphate + ATP = D-ribulose 1,5-bisphosphate + ADP + H(+). It functions in the pathway carbohydrate biosynthesis; Calvin cycle. Its activity is regulated as follows. Light regulated via thioredoxin by reversible oxidation/reduction of sulfhydryl/disulfide groups. This chain is Phosphoribulokinase, chloroplastic, found in Triticum aestivum (Wheat).